Here is a 231-residue protein sequence, read N- to C-terminus: Lipoprotein-releasing system ATP-binding protein LolD 2 (231 aa).

Residues 6–230 form the ABC transporter domain; sequence VEARSLSKSF…DGRLVGQDPA (225 aa). Residue 42 to 49 participates in ATP binding; the sequence is GPSGSGKS.

The protein belongs to the ABC transporter superfamily. Lipoprotein translocase (TC 3.A.1.125) family. In terms of assembly, the complex is composed of two ATP-binding proteins (LolD) and two transmembrane proteins (LolC and LolE).

It localises to the cell inner membrane. Functionally, part of the ABC transporter complex LolCDE involved in the translocation of mature outer membrane-directed lipoproteins, from the inner membrane to the periplasmic chaperone, LolA. Responsible for the formation of the LolA-lipoprotein complex in an ATP-dependent manner. In Rhodospirillum rubrum (strain ATCC 11170 / ATH 1.1.1 / DSM 467 / LMG 4362 / NCIMB 8255 / S1), this protein is Lipoprotein-releasing system ATP-binding protein LolD 2.